The chain runs to 236 residues: uncharacterized protein (236 aa).

A signal peptide spans 1–24 (MRKKHFNMILKLALISSLLALAAS). 3 N-linked (GlcNAc...) asparagine glycosylation sites follow: Asn-59, Asn-171, and Asn-197.

Its subcellular location is the secreted. This is an uncharacterized protein from Caenorhabditis elegans.